The chain runs to 192 residues: Peptidyl-tRNA hydrolase (192 aa).

Tyrosine 14 is a binding site for tRNA. The active-site Proton acceptor is histidine 19. Residues tyrosine 66 and asparagine 68 each contribute to the tRNA site.

The protein belongs to the PTH family. As to quaternary structure, monomer.

The protein localises to the cytoplasm. The catalysed reaction is an N-acyl-L-alpha-aminoacyl-tRNA + H2O = an N-acyl-L-amino acid + a tRNA + H(+). In terms of biological role, hydrolyzes ribosome-free peptidyl-tRNAs (with 1 or more amino acids incorporated), which drop off the ribosome during protein synthesis, or as a result of ribosome stalling. Catalyzes the release of premature peptidyl moieties from peptidyl-tRNA molecules trapped in stalled 50S ribosomal subunits, and thus maintains levels of free tRNAs and 50S ribosomes. The protein is Peptidyl-tRNA hydrolase of Coprothermobacter proteolyticus (strain ATCC 35245 / DSM 5265 / OCM 4 / BT).